The primary structure comprises 511 residues: GMP synthase [glutamine-hydrolyzing] (511 aa).

The 191-residue stretch at 5–195 folds into the Glutamine amidotransferase type-1 domain; that stretch reads DILVLDFGSQ…AKYACNCDSV (191 aa). Catalysis depends on Cys82, which acts as the Nucleophile. Active-site residues include His169 and Glu171. In terms of domain architecture, GMPS ATP-PPase spans 196-386; it reads WNMGSFAKTQ…LGLSKDVVYR (191 aa). 223–229 contacts ATP; that stretch reads SGGVDSS.

Homodimer.

It catalyses the reaction XMP + L-glutamine + ATP + H2O = GMP + L-glutamate + AMP + diphosphate + 2 H(+). It functions in the pathway purine metabolism; GMP biosynthesis; GMP from XMP (L-Gln route): step 1/1. In terms of biological role, catalyzes the synthesis of GMP from XMP. The sequence is that of GMP synthase [glutamine-hydrolyzing] from Campylobacter lari (strain RM2100 / D67 / ATCC BAA-1060).